The sequence spans 225 residues: UPF0758 protein AZOSEA04420 (225 aa).

The 124-residue stretch at 102–225 folds into the MPN domain; it reads VFESPLAVRN…PLSFAERGLL (124 aa). Positions 173, 175, and 186 each coordinate Zn(2+). The JAMM motif signature appears at 173–186; sequence HNHPSGAAEPSPAD.

It belongs to the UPF0758 family.

The chain is UPF0758 protein AZOSEA04420 from Aromatoleum aromaticum (strain DSM 19018 / LMG 30748 / EbN1) (Azoarcus sp. (strain EbN1)).